The primary structure comprises 93 residues: Large ribosomal subunit protein eL42 (93 aa).

Zn(2+) contacts are provided by Cys11, Cys14, Cys71, and Cys74. Residues 11–74 (CRYCGKHTLH…VNIRFRCTEC (64 aa)) form a C4-type zinc finger.

This sequence belongs to the eukaryotic ribosomal protein eL42 family. As to quaternary structure, part of the 50S ribosomal subunit. Zn(2+) is required as a cofactor.

Binds to the 23S rRNA. In Archaeoglobus fulgidus (strain ATCC 49558 / DSM 4304 / JCM 9628 / NBRC 100126 / VC-16), this protein is Large ribosomal subunit protein eL42.